A 172-amino-acid chain; its full sequence is 2S seed storage-like protein (172 aa).

The signal sequence occupies residues Met-1–Gly-35. Positions Phe-108–Lys-172 are disordered. Positions Glu-151–Arg-160 are enriched in basic and acidic residues.

This sequence belongs to the 2S seed storage albumins family.

The sequence is that of 2S seed storage-like protein from Picea glauca (White spruce).